A 231-amino-acid chain; its full sequence is Orotidine 5'-phosphate decarboxylase (231 aa).

Residues Asp-11, Lys-33, 60–69, Thr-120, Arg-181, Gln-190, Gly-210, and Arg-211 each bind substrate; that span reads DLKFHDIPNT. Lys-62 acts as the Proton donor in catalysis.

The protein belongs to the OMP decarboxylase family. Type 1 subfamily. Homodimer.

The enzyme catalyses orotidine 5'-phosphate + H(+) = UMP + CO2. The protein operates within pyrimidine metabolism; UMP biosynthesis via de novo pathway; UMP from orotate: step 2/2. Its function is as follows. Catalyzes the decarboxylation of orotidine 5'-monophosphate (OMP) to uridine 5'-monophosphate (UMP). In Colwellia psychrerythraea (strain 34H / ATCC BAA-681) (Vibrio psychroerythus), this protein is Orotidine 5'-phosphate decarboxylase.